Consider the following 147-residue polypeptide: Large ribosomal subunit protein bL9 (147 aa).

This sequence belongs to the bacterial ribosomal protein bL9 family.

Functionally, binds to the 23S rRNA. The polypeptide is Large ribosomal subunit protein bL9 (Sulfurovum sp. (strain NBC37-1)).